A 369-amino-acid polypeptide reads, in one-letter code: tRNA 2-selenouridine synthase (369 aa).

Positions 12–136 (FLDDIPLMDV…LRNFLFETTR (125 aa)) constitute a Rhodanese domain. Cysteine 95 (S-selanylcysteine intermediate) is an active-site residue.

This sequence belongs to the SelU family. In terms of assembly, monomer.

It carries out the reaction 5-methylaminomethyl-2-thiouridine(34) in tRNA + selenophosphate + (2E)-geranyl diphosphate + H2O + H(+) = 5-methylaminomethyl-2-selenouridine(34) in tRNA + (2E)-thiogeraniol + phosphate + diphosphate. It catalyses the reaction 5-methylaminomethyl-2-thiouridine(34) in tRNA + (2E)-geranyl diphosphate = 5-methylaminomethyl-S-(2E)-geranyl-thiouridine(34) in tRNA + diphosphate. The catalysed reaction is 5-methylaminomethyl-S-(2E)-geranyl-thiouridine(34) in tRNA + selenophosphate + H(+) = 5-methylaminomethyl-2-(Se-phospho)selenouridine(34) in tRNA + (2E)-thiogeraniol. The enzyme catalyses 5-methylaminomethyl-2-(Se-phospho)selenouridine(34) in tRNA + H2O = 5-methylaminomethyl-2-selenouridine(34) in tRNA + phosphate. Functionally, involved in the post-transcriptional modification of the uridine at the wobble position (U34) of tRNA(Lys), tRNA(Glu) and tRNA(Gln). Catalyzes the conversion of 2-thiouridine (S2U-RNA) to 2-selenouridine (Se2U-RNA). Acts in a two-step process involving geranylation of 2-thiouridine (S2U) to S-geranyl-2-thiouridine (geS2U) and subsequent selenation of the latter derivative to 2-selenouridine (Se2U) in the tRNA chain. This chain is tRNA 2-selenouridine synthase, found in Pseudomonas aeruginosa (strain LESB58).